Consider the following 1201-residue polypeptide: HEAT repeat-containing protein 6 (1201 aa).

Residues 1–25 form a disordered region; the sequence is MAGKVTFLGSNSSFSPDGKTQGFKS. One copy of the HEAT 1 repeat lies at 182-221; that stretch reads PDLLGPSGVLVKYGDPKQPDIELRRSAVHCIANLCLSVPS. Positions 321–390 are disordered; that stretch reads AVKPEPAQDT…SQSSMLTSPS (70 aa). Positions 341–352 are enriched in basic residues; sequence QKKRKSRGKGKK. Residues 375–390 are compositionally biased toward polar residues; sequence SGWSHGSQSSMLTSPS. HEAT repeat units follow at residues 460 to 498, 523 to 560, and 566 to 603; these read GIGG…GSRQ, SIRE…NVPY, and GLLS…TQAP. Over residues 618-633 the composition is skewed to polar residues; sequence SSLGSGISTPQESPLS. The interval 618-653 is disordered; it reads SSLGSGISTPQESPLSWRQPARRDEEASSPAAAEGP.

The protein is HEAT repeat-containing protein 6 (heatr6) of Danio rerio (Zebrafish).